A 212-amino-acid polypeptide reads, in one-letter code: Pyridoxine/pyridoxamine 5'-phosphate oxidase (212 aa).

Substrate-binding positions include 7 to 10 (REEY) and lysine 65. FMN is bound by residues 60 to 65 (RTVLLK), 75 to 76 (FT), lysine 82, and glutamine 104. Substrate contacts are provided by tyrosine 122, arginine 126, and serine 130. FMN-binding positions include 139–140 (QS) and tryptophan 184. Residue 190–192 (RLH) participates in substrate binding. Arginine 194 serves as a coordination point for FMN.

This sequence belongs to the pyridoxamine 5'-phosphate oxidase family. Homodimer. FMN is required as a cofactor.

It catalyses the reaction pyridoxamine 5'-phosphate + O2 + H2O = pyridoxal 5'-phosphate + H2O2 + NH4(+). It carries out the reaction pyridoxine 5'-phosphate + O2 = pyridoxal 5'-phosphate + H2O2. Its pathway is cofactor metabolism; pyridoxal 5'-phosphate salvage; pyridoxal 5'-phosphate from pyridoxamine 5'-phosphate: step 1/1. It participates in cofactor metabolism; pyridoxal 5'-phosphate salvage; pyridoxal 5'-phosphate from pyridoxine 5'-phosphate: step 1/1. Catalyzes the oxidation of either pyridoxine 5'-phosphate (PNP) or pyridoxamine 5'-phosphate (PMP) into pyridoxal 5'-phosphate (PLP). This chain is Pyridoxine/pyridoxamine 5'-phosphate oxidase, found in Rippkaea orientalis (strain PCC 8801 / RF-1) (Cyanothece sp. (strain PCC 8801)).